Consider the following 448-residue polypeptide: Probable cytosolic Fe-S cluster assembly factor Bm6838 (448 aa).

Residues cysteine 27, cysteine 66, cysteine 69, cysteine 72, cysteine 170, cysteine 226, cysteine 370, and cysteine 374 each coordinate [4Fe-4S] cluster.

Belongs to the NARF family.

Functionally, component of the cytosolic iron-sulfur (Fe/S) protein assembly machinery. Required for maturation of extramitochondrial Fe/S proteins. This Brugia malayi (Filarial nematode worm) protein is Probable cytosolic Fe-S cluster assembly factor Bm6838.